Here is a 132-residue protein sequence, read N- to C-terminus: Large ribosomal subunit protein uL14 (132 aa).

The protein belongs to the universal ribosomal protein uL14 family. Part of the 50S ribosomal subunit. Forms a cluster with proteins L3 and L24e, part of which may contact the 16S rRNA in 2 intersubunit bridges.

Its function is as follows. Binds to 23S rRNA. Forms part of two intersubunit bridges in the 70S ribosome. The protein is Large ribosomal subunit protein uL14 of Methanospirillum hungatei JF-1 (strain ATCC 27890 / DSM 864 / NBRC 100397 / JF-1).